The following is a 1092-amino-acid chain: Rho GTPase-activating protein 7 (1092 aa).

An SAM domain is found at 11–78; the sequence is LTQIEAKEAC…LNKCAVMKLE (68 aa). Phosphoserine is present on residues serine 86, serine 89, and serine 129. Disordered regions lie at residues 121 to 179, 297 to 330, 409 to 434, and 492 to 553; these read PKQD…DATT, RSVS…TRSL, GPGH…NSSS, and SDEG…SGVG. Polar residues predominate over residues 130-143; sequence PDNSRLQSATSHES. Low complexity-rich tracts occupy residues 154–174 and 299–325; these read VASV…AAHS and VSNS…SPVT. The segment at 275 to 448 is focal adhesion-targeting (FAT); it reads QLNCVEISAL…RLSIYDNVPG (174 aa). The residue at position 322 (serine 322) is a Phosphoserine. Over residues 415–426 the composition is skewed to basic and acidic residues; sequence LRRENSHDSPKE. A compositionally biased stretch (polar residues) spans 500 to 512; the sequence is ALDSVSPCPSSPK. The segment covering 514-526 has biased composition (basic and acidic residues); the sequence is IHLDVDHDRRTPS. Polar residues predominate over residues 527-536; that stretch reads DLDSTGNSLN. The segment at 615–637 is polybasic cluster (PBR); sequence KHGFSWAVPKFMKRIKVPDYKDR. Positions 642–848 constitute a Rho-GAP domain; that stretch reads VPLTVNVQRS…HMIAECKKLF (207 aa). The 208-residue stretch at 878-1085 folds into the START domain; that stretch reads NSDQPADYRH…RDSFSNQNTE (208 aa).

In terms of assembly, interacts with EF1A1, facilitates EF1A1 distribution to the membrane periphery and ruffles upon growth factor stimulation and suppresses cell migration. Interacts with tensin TNS1 (via N-terminus); the interaction is decreased by phosphorylation of TNS1. Interacts with TNS3 and PTEN; in resting cells, interacts with TNS3 (via C2 tensin-type domain) but, following growth factor stimulation, TNS3 and PTEN are phosphorylated which leads to weakened interaction with TNS3 and enhanced interaction with PTEN. Interacts (via C-terminus) with tensin TNS4 (via SH2 domain); the interaction is independent of tyrosine phosphorylation of DLC1. In terms of tissue distribution, widely expressed with the highest levels in heart, liver and lung.

Its subcellular location is the cytoplasm. The protein resides in the cell junction. It localises to the focal adhesion. It is found in the membrane. Functions as a GTPase-activating protein for the small GTPases RHOA, RHOB, RHOC and CDC42, terminating their downstream signaling. This induces morphological changes and detachment through cytoskeletal reorganization, playing a critical role in biological processes such as cell migration and proliferation. Also functions in vivo as an activator of the phospholipase PLCD1. Active DLC1 increases cell migration velocity but reduces directionality. Required for growth factor-induced epithelial cell migration; in resting cells, interacts with TNS3 while PTEN interacts with the p85 regulatory subunit of the PI3K kinase complex but growth factor stimulation induces phosphorylation of TNS3 and PTEN, causing them to change their binding preference so that PTEN interacts with DLC1 and TNS3 interacts with p85. The PTEN-DLC1 complex translocates to the posterior of migrating cells to activate RHOA while the TNS3-p85 complex translocates to the leading edge of migrating cells to promote RAC1 activation. The sequence is that of Rho GTPase-activating protein 7 (Dlc1) from Mus musculus (Mouse).